Here is a 196-residue protein sequence, read N- to C-terminus: O-methyltransferase dpmpI (196 aa).

S-adenosyl-L-methionine is bound by residues 127-128, aspartate 152, and 174-175; these read GG and SF. Residues 166–196 form a disordered region; that stretch reads NGIEAVPHSFEDPQPIKSKSPRLDNLARERL. Residues 186–196 show a composition bias toward basic and acidic residues; sequence PRLDNLARERL.

Belongs to the class I-like SAM-binding methyltransferase superfamily. Cation-independent O-methyltransferase family.

It participates in secondary metabolite biosynthesis; terpenoid biosynthesis. Functionally, O-methyltransferase; part of the gene cluster that mediates the biosynthesis of diterpenoid pyrones. The first step of the pathway is the synthesis of the alpha-pyrone moiety by the polyketide synthase dpmpA via condensation of one acetyl-CoA starter unit with 3 malonyl-CoA units and 2 methylations. The alpha-pyrone is then combined with geranylgeranyl pyrophosphate (GGPP) formed by the GGPP synthase dpmpD through the action of the prenyltransferase dpmpC to yield a linear alpha-pyrone diterpenoid. Subsequent steps in the diterpenoid pyrone biosynthetic pathway involve the decalin core formation, which is initiated by the epoxidation of the C10-C11 olefin by the FAD-dependent oxidoreductase dpmpE, and is followed by a cyclization cascade catalyzed by the terpene cyclase dpmpB. The short chain dehydrogenase/reductase dpmpG then oxidizes the 8S hydroxy group to a ketone and the short chain dehydrogenase/reductase dpmpH reduces the ketone to the 8R hydroxy group to yield higginsianin B. Higginsianin B is further methylated by the methyltransferase dpmpI to produce the intermediate named FDDP B. The cytochrome P450 monooxygenase dpmpJ then oxidizes the C-26 methyl to primary alcohol, producing the final diterpenoid pyrone with a C-26 primary alcohol on the gamma-pyrone moiety named FDDP C. This Macrophomina phaseolina (strain MS6) (Charcoal rot fungus) protein is O-methyltransferase dpmpI.